Consider the following 204-residue polypeptide: MFTVTVKNMGTTEYLTAWQAMKNFTAQRTCETPDEIWLLEHPPVYTQGIAGKPEHLLFPNQIPVIKTDRGGQITYHGPGQIILYLLLDLHRWRLNIRQLVRKMEGAVIDLLSEYDVVAQGDENAPGVYVDGAKIASLGLKIRRGACYHGIAFNADMDLTPFTAINPCGYRGLRVTQAKDLGIADCKEMLATKLAQSFINQLTDV.

The region spanning 30–204 (CETPDEIWLL…QSFINQLTDV (175 aa)) is the BPL/LPL catalytic domain. Substrate contacts are provided by residues 69–76 (RGGQITYH), 136–138 (SLG), and 149–151 (GIA). Cysteine 167 (acyl-thioester intermediate) is an active-site residue.

The protein belongs to the LipB family.

Its subcellular location is the cytoplasm. It carries out the reaction octanoyl-[ACP] + L-lysyl-[protein] = N(6)-octanoyl-L-lysyl-[protein] + holo-[ACP] + H(+). It participates in protein modification; protein lipoylation via endogenous pathway; protein N(6)-(lipoyl)lysine from octanoyl-[acyl-carrier-protein]: step 1/2. Functionally, catalyzes the transfer of endogenously produced octanoic acid from octanoyl-acyl-carrier-protein onto the lipoyl domains of lipoate-dependent enzymes. Lipoyl-ACP can also act as a substrate although octanoyl-ACP is likely to be the physiological substrate. The sequence is that of Octanoyltransferase from Nitrosomonas europaea (strain ATCC 19718 / CIP 103999 / KCTC 2705 / NBRC 14298).